The chain runs to 363 residues: Crh-like protein 3 (363 aa).

The N-terminal stretch at 1 to 19 (MSLLYLVALFVASICSVTA) is a signal peptide. Cysteine 25 and cysteine 32 are disulfide-bonded. In terms of domain architecture, GH16 spans 26 to 237 (NPLTTTCPPD…YSKAPFTMVL (212 aa)). N-linked (GlcNAc...) asparagine glycans are attached at residues asparagine 41, asparagine 47, and asparagine 56. Residue glutamate 118 is the Nucleophile of the active site. Glutamate 122 (proton donor) is an active-site residue. A chitin-binding site is contributed by glutamate 122. N-linked (GlcNAc...) asparagine glycosylation is found at asparagine 127, asparagine 141, and asparagine 161. 3 residues coordinate chitin: arginine 203, tryptophan 207, and threonine 218. 2 N-linked (GlcNAc...) asparagine glycosylation sites follow: asparagine 252 and asparagine 269. Residues 298 to 318 (VYIGAGCVGAALLAGFIFFFI) form a helical membrane-spanning segment.

Belongs to the glycosyl hydrolase 16 family. CRH1 subfamily. The GPI-like anchor contains a phosphoceramide lipid group. The anchor position has not been determined.

It is found in the cell membrane. The protein localises to the secreted. The protein resides in the cell wall. The enzyme catalyses Random endo-hydrolysis of N-acetyl-beta-D-glucosaminide (1-&gt;4)-beta-linkages in chitin and chitodextrins.. Functionally, dual chitinase/transglycosylase that plays a role in cell wall architecture. Chitinase and transglycosylase activities are coupled. Required for the polysaccharide cross-linking at the septa and the cell wall. More specifically, transfers chitin to 1,6-beta-glucan in the cell wall. The sequence is that of Crh-like protein 3 from Aspergillus fumigatus (strain ATCC MYA-4609 / CBS 101355 / FGSC A1100 / Af293) (Neosartorya fumigata).